Reading from the N-terminus, the 276-residue chain is Large ribosomal subunit protein uL2 (276 aa).

The segment at 225-276 (VMNPVDHPHGGGEGKTAAGRDPVSPWGTPTKGYRTRSNKRTDSMIVQKRHKR) is disordered.

It belongs to the universal ribosomal protein uL2 family. In terms of assembly, part of the 50S ribosomal subunit. Forms a bridge to the 30S subunit in the 70S ribosome.

In terms of biological role, one of the primary rRNA binding proteins. Required for association of the 30S and 50S subunits to form the 70S ribosome, for tRNA binding and peptide bond formation. It has been suggested to have peptidyltransferase activity; this is somewhat controversial. Makes several contacts with the 16S rRNA in the 70S ribosome. This chain is Large ribosomal subunit protein uL2, found in Cupriavidus taiwanensis (strain DSM 17343 / BCRC 17206 / CCUG 44338 / CIP 107171 / LMG 19424 / R1) (Ralstonia taiwanensis (strain LMG 19424)).